The primary structure comprises 302 residues: GrpE protein homolog 1, mitochondrial (302 aa).

The transit peptide at 1 to 39 (MLVSRVLSRVSRSAGLRSSFSSVVTPKRNQIPIVASRFH) directs the protein to the mitochondrion. A disordered region spans residues 77-97 (SAEPKGNESNTEVPKTGETSE).

Belongs to the GrpE family. As to quaternary structure, probable component of the PAM complex, at least composed of SSC1 (mtHsp70), MGE1, TIM44, PAM16/TIM16, PAM17 and PAM18/TIM14. Interacts with SSQ1.

Its subcellular location is the mitochondrion matrix. Functionally, essential component of the PAM complex, a complex required for the translocation of transit peptide-containing proteins from the inner membrane into the mitochondrial matrix in an ATP-dependent manner. Seems to control the nucleotide-dependent binding of mitochondrial HSP70 to substrate proteins. Binds ATP. Interacts with copper ions Cu(2+). In Arabidopsis thaliana (Mouse-ear cress), this protein is GrpE protein homolog 1, mitochondrial.